A 601-amino-acid chain; its full sequence is ATP-dependent lipid A-core flippase (601 aa).

A run of 4 helical transmembrane segments spans residues 26-46 (VGLFAVSILGYVIFASSQPML), 82-102 (LMIVLIAAWQGLGGYLGNYFL), 167-187 (VFLFAYLLWMNWRLTLVMVAI), and 263-283 (VYTPTLQLVTYSAMAVVLFLV). The 292-residue stretch at 30 to 321 (AVSILGYVIF…LSEVSSTIQR (292 aa)) folds into the ABC transmembrane type-1 domain. The ABC transporter domain maps to 353–589 (IEVRDLSFRY…GGHYARLHAM (237 aa)). 387-394 (GRSGSGKS) contacts ATP.

This sequence belongs to the ABC transporter superfamily. Lipid exporter (TC 3.A.1.106) family. In terms of assembly, homodimer.

The protein resides in the cell inner membrane. The catalysed reaction is ATP + H2O + lipid A-core oligosaccharideSide 1 = ADP + phosphate + lipid A-core oligosaccharideSide 2.. Involved in lipopolysaccharide (LPS) biosynthesis. Translocates lipid A-core from the inner to the outer leaflet of the inner membrane. Transmembrane domains (TMD) form a pore in the inner membrane and the ATP-binding domain (NBD) is responsible for energy generation. The protein is ATP-dependent lipid A-core flippase of Aromatoleum aromaticum (strain DSM 19018 / LMG 30748 / EbN1) (Azoarcus sp. (strain EbN1)).